The primary structure comprises 221 residues: Stromal cell-derived factor 2-like protein 1 (221 aa).

The signal sequence occupies residues 1 to 28 (MWGASRGRVAGPTLLGLLLALSVRSGGA). MIR domains lie at 33–87 (AGLV…IRGG), 95–150 (GLPV…VRCS), and 151–205 (GQHW…AMEG). Residue serine 215 is modified to Phosphoserine. Residues 218 to 221 (HDEL) carry the Prevents secretion from ER motif.

Ubiquitously expressed with high expression in the testis, ovary, uterus, and low expression in heart and skeletal muscle.

The protein resides in the endoplasmic reticulum lumen. This Mus musculus (Mouse) protein is Stromal cell-derived factor 2-like protein 1 (Sdf2l1).